The chain runs to 365 residues: Selina-4(15),7(11)-diene synthase ((2E,6E)-farnesyl diphosphate cyclizing) (365 aa).

Residues Asp-82 and Glu-87 each contribute to the Mg(2+) site. The DDXXXE motif motif lies at Asp-82–Glu-87. Substrate is bound at residue Arg-178. Positions 224 and 228 each coordinate Mg(2+). Lys-231 serves as a coordination point for substrate. A Mg(2+)-binding site is contributed by Glu-232. Residue Arg-310–Tyr-311 coordinates substrate.

The protein belongs to the terpene synthase family. As to quaternary structure, monomer. Mg(2+) is required as a cofactor.

It carries out the reaction (2E,6E)-farnesyl diphosphate = selina-4(15),7(11)-diene + diphosphate. It functions in the pathway secondary metabolite biosynthesis; terpenoid biosynthesis. Catalyzes the conversion of (2E,6E)-farnesyl diphosphate (FPP) to yield the bicyclic sesquiterpene selina-4(15),7(11)-diene via a 1,10-cyclization, which requires the abstraction of the pyrophosphate from FPP leading to a (E,E)-germacradienyl cation. The only accepted substrate is (2E,6E)-farnesyl diphosphate (FPP). This chain is Selina-4(15),7(11)-diene synthase ((2E,6E)-farnesyl diphosphate cyclizing), found in Streptomyces pristinaespiralis (strain ATCC 25486 / DSM 40338 / CBS 914.69 / JCM 4507 / KCC S-0507 / NBRC 13074 / NRRL 2958 / 5647).